Consider the following 523-residue polypeptide: MGSLMQSEPEMEKKPIGIRFLERIKGSKLSYSAYQAIVLIVTFLAYASYHAARKTTSIVKSALDPQSPDTGLNSLLLRFTSFGSSVKEEGGWAPFNGPDGTVLLGEIDVAFLAVYAFGMYFAGHLGDRMNLRIFLTVGMIGTGLFTSLFGVGYWGNIHSFYYFLIMQMLAGLFQSSGWPSVVAVVGNWFNKKKRGLIMGIWNAHTSVGNITGSLIAAAMLRYGWGWSFVVPGVIIVVIGLVNYAFLPVSPENVGAERDEVLDSSSEKIGNSVNEPLLLSSSDSETDDKKRAVGFIEAWRIPGVAPFALCLFFAKLVAYTFLYWLPFYVSHTAIEGEYLSDETAGNLSTMFDVGGVVGGIMAGYISDRIGARAITAASFMYCSIPALFFYRSYGHVSLLANASLMFLTGMLVNGPYALITTAVSADLGTHSSLKGNSRALATVTAIIDGTGSVGAAVGPLLTGYISSRGSWTAVFTMLMGAAFVAGLLLTRLVMAEVAEKIAESRPSEECRSPVDYVQDHVMEV.

12 helical membrane-spanning segments follow: residues 29–49, 102–122, 133–153, 163–183, 196–216, 228–248, 306–326, 344–364, 368–388, 402–422, 444–464, and 468–488; these read LSYS…YASY, VLLG…MYFA, IFLT…GVGY, FLIM…SVVA, LIMG…SLIA, FVVP…FLPV, FALC…WLPF, GNLS…AGYI, IGAR…ALFF, SLMF…TTAV, AIID…TGYI, and GSWT…GLLL.

Belongs to the major facilitator superfamily. Organophosphate:Pi antiporter (OPA) (TC 2.A.1.4) family.

The protein localises to the membrane. In Arabidopsis thaliana (Mouse-ear cress), this protein is Putative glycerol-3-phosphate transporter 1.